A 209-amino-acid chain; its full sequence is Imidazole glycerol phosphate synthase subunit HisH (209 aa).

The 207-residue stretch at 3–209 folds into the Glutamine amidotransferase type-1 domain; that stretch reads SVAVIDYGMG…ANFLTWNGVS (207 aa). Residue C82 is the Nucleophile of the active site. Catalysis depends on residues H187 and E189.

In terms of assembly, heterodimer of HisH and HisF.

The protein resides in the cytoplasm. It carries out the reaction 5-[(5-phospho-1-deoxy-D-ribulos-1-ylimino)methylamino]-1-(5-phospho-beta-D-ribosyl)imidazole-4-carboxamide + L-glutamine = D-erythro-1-(imidazol-4-yl)glycerol 3-phosphate + 5-amino-1-(5-phospho-beta-D-ribosyl)imidazole-4-carboxamide + L-glutamate + H(+). It catalyses the reaction L-glutamine + H2O = L-glutamate + NH4(+). It functions in the pathway amino-acid biosynthesis; L-histidine biosynthesis; L-histidine from 5-phospho-alpha-D-ribose 1-diphosphate: step 5/9. Its function is as follows. IGPS catalyzes the conversion of PRFAR and glutamine to IGP, AICAR and glutamate. The HisH subunit catalyzes the hydrolysis of glutamine to glutamate and ammonia as part of the synthesis of IGP and AICAR. The resulting ammonia molecule is channeled to the active site of HisF. The chain is Imidazole glycerol phosphate synthase subunit HisH from Nitrosococcus oceani (strain ATCC 19707 / BCRC 17464 / JCM 30415 / NCIMB 11848 / C-107).